The primary structure comprises 90 residues: Guanine nucleotide-binding protein subunit gamma (90 aa).

Residue C86 is the site of S-palmitoyl cysteine attachment. Position 87 is a cysteine methyl ester (C87). The S-farnesyl cysteine moiety is linked to residue C87. Positions 88–90 are cleaved as a propeptide — removed in mature form; sequence TIM.

It belongs to the G protein gamma family. As to quaternary structure, g proteins are composed of 3 units, alpha, beta and gamma.

It localises to the membrane. This chain is Guanine nucleotide-binding protein subunit gamma, found in Kluyveromyces lactis (strain ATCC 8585 / CBS 2359 / DSM 70799 / NBRC 1267 / NRRL Y-1140 / WM37) (Yeast).